A 604-amino-acid polypeptide reads, in one-letter code: 3-hydroxy-3-methylglutaryl-coenzyme A reductase 2 (604 aa).

Transmembrane regions (helical) follow at residues 47-67 and 91-111; these read LPLY…MYFL and AIVS…IGFV. The tract at residues 112–188 is linker; it reads QTFVARGNND…APLVTPAASE (77 aa). N120 is a glycosylation site (N-linked (GlcNAc...) asparagine). The interval 189 to 604 is catalytic; it reads EDEEIIKSVV…STKDVTKASS (416 aa). Catalysis depends on E283, which acts as the Charge relay system. N-linked (GlcNAc...) asparagine glycosylation is present at N347. K415 (charge relay system) is an active-site residue. Residue N460 is glycosylated (N-linked (GlcNAc...) asparagine). The active-site Charge relay system is D491. The active-site Proton donor is H589. An N-linked (GlcNAc...) asparagine glycan is attached at N593.

This sequence belongs to the HMG-CoA reductase family.

It is found in the endoplasmic reticulum membrane. It carries out the reaction (R)-mevalonate + 2 NADP(+) + CoA = (3S)-3-hydroxy-3-methylglutaryl-CoA + 2 NADPH + 2 H(+). Its pathway is metabolic intermediate biosynthesis; (R)-mevalonate biosynthesis; (R)-mevalonate from acetyl-CoA: step 3/3. Its function is as follows. Catalyzes the synthesis of mevalonate. The specific precursor of all isoprenoid compounds present in plants. The polypeptide is 3-hydroxy-3-methylglutaryl-coenzyme A reductase 2 (HMGR2) (Capsicum annuum (Capsicum pepper)).